We begin with the raw amino-acid sequence, 193 residues long: Ion-translocating oxidoreductase complex subunit A (193 aa).

6 helical membrane-spanning segments follow: residues 5–25 (LLLFVGTVLVNNFVLVKFLGL), 47–67 (FVMTLASICAWLIDTWILIPL), 72–92 (LRTMAFILVIAVVVQFTEMVV), 102–122 (LLGIFLPLITTNCAVLGVALL), 134–154 (ALYGFSAAVGFSLVMVLFAAI), and 171–191 (AIALITAGLMSLAFMGFSGLV).

It belongs to the NqrDE/RnfAE family. In terms of assembly, the complex is composed of six subunits: RsxA, RsxB, RsxC, RsxD, RsxE and RsxG.

It localises to the cell inner membrane. Its function is as follows. Part of a membrane-bound complex that couples electron transfer with translocation of ions across the membrane. Required to maintain the reduced state of SoxR. This Escherichia coli O45:K1 (strain S88 / ExPEC) protein is Ion-translocating oxidoreductase complex subunit A.